The chain runs to 352 residues: Nuclear receptor subfamily 1 group I member 3 (352 aa).

Residues 8–83 (LRNCVVCGDQ…AGMRKDMILS (76 aa)) constitute a DNA-binding region (nuclear receptor). An NR C4-type zinc finger spans residues 11-31 (CVVCGDQATGYHFNALTCEGC). T38 is subject to Phosphothreonine; by PKC. The NR C4-type zinc-finger motif lies at 47-71 (CPFAGSCEVSKIQRRHCPACRLQKC). The NR LBD domain occupies 109–352 (EQEELIQTLL…MMPLLQEICS (244 aa)).

This sequence belongs to the nuclear hormone receptor family. NR1 subfamily. In terms of assembly, heterodimer of NR1I3 and RXR. Interacts with PSMC4. Interacts with ECT2. Directly interacts with DNAJC7; this complex may also include HSP90. Interacts with CRY1. Interacts with CRY2 in a ligand-dependent manner. In terms of processing, phosphorylated at Thr-38 by PKC, dephosphorylation of Thr-38 is required for nuclear translocation and activation.

The protein resides in the nucleus. It localises to the cytoplasm. The protein localises to the cytoskeleton. Its function is as follows. Binds and transactivates the retinoic acid response elements that control expression of the retinoic acid receptor beta 2 and alcohol dehydrogenase 3 genes. Transactivates both the phenobarbital responsive element module of the human CYP2B6 gene and the CYP3A4 xenobiotic response element. In Macaca mulatta (Rhesus macaque), this protein is Nuclear receptor subfamily 1 group I member 3 (NR1I3).